A 512-amino-acid chain; its full sequence is Flavonoid 3'-monooxygenase (512 aa).

The helical transmembrane segment at Met-1 to Leu-21 threads the bilayer. The Cytoplasmic portion of the chain corresponds to Arg-22–Gly-512. Residue Cys-447 participates in heme binding.

This sequence belongs to the cytochrome P450 family. It depends on heme as a cofactor. High expression in petals and ovaries and to a lower extent in sepals, pedicels, anthers and stems. Not detected in leaves, style or roots.

It is found in the endoplasmic reticulum membrane. It carries out the reaction a 3'-unsubstituted flavone + reduced [NADPH--hemoprotein reductase] + O2 = a 3'-hydroxyflavone + oxidized [NADPH--hemoprotein reductase] + H2O + H(+). Its pathway is secondary metabolite biosynthesis; flavonoid biosynthesis. In terms of biological role, catalyzes the 3'-hydroxylation of the flavonoid B-ring to the 3',4'-hydroxylated state. Convert naringenin to eriodictyol and dihydrokaempferol to dihydroquercetin. The sequence is that of Flavonoid 3'-monooxygenase (CYP75B2) from Petunia hybrida (Petunia).